The sequence spans 431 residues: Gamma-glutamyl phosphate reductase (431 aa).

Belongs to the gamma-glutamyl phosphate reductase family.

The protein localises to the cytoplasm. It catalyses the reaction L-glutamate 5-semialdehyde + phosphate + NADP(+) = L-glutamyl 5-phosphate + NADPH + H(+). Its pathway is amino-acid biosynthesis; L-proline biosynthesis; L-glutamate 5-semialdehyde from L-glutamate: step 2/2. Catalyzes the NADPH-dependent reduction of L-glutamate 5-phosphate into L-glutamate 5-semialdehyde and phosphate. The product spontaneously undergoes cyclization to form 1-pyrroline-5-carboxylate. The chain is Gamma-glutamyl phosphate reductase from Beijerinckia indica subsp. indica (strain ATCC 9039 / DSM 1715 / NCIMB 8712).